An 82-amino-acid chain; its full sequence is U6 snRNA-associated Sm-like protein LSm6 (82 aa).

A Sm domain is found at 13 to 82 (DPSGFLSEII…GNNVMYISAD (70 aa)).

Belongs to the snRNP Sm proteins family. SmF/LSm6 subfamily. In terms of assembly, component of the heptameric LSM1-LSM7 complex, which consists of snr-1/lsm1, snr-2/lsm2, snr-3/lsm3, snr-4/lsm4, snr-5/lsm5, snr-6/lsm6 and snr-7/lsm7. Component of the heptameric LSM2-LSM8 complex, which consists of snr-2/lsm2, snr-3/lsm3, snr-4/lsm4, snr-5/lsm5, snr-6/lsm6, snr-7/lsm7 and snr-8/lsm8. The LSm subunits form a seven-membered ring structure with a doughnut shape.

The protein localises to the cytoplasm. It is found in the nucleus. Its function is as follows. Component of LSm protein complexes, which are involved in RNA processing and may function in a chaperone-like manner, facilitating the efficient association of RNA processing factors with their substrates. Component of the cytoplasmic LSM1-LSM7 complex, which is thought to be involved in mRNA degradation by activating the decapping step in the 5'-to-3' mRNA decay pathway. Component of the nuclear LSM2-LSM8 complex, which is involved in splicing of nuclear mRNAs. LSM2-LSM8 associates with multiple snRNP complexes containing the U6 snRNA (U4/U6 di-snRNP, spliceosomal U4/U6.U5 tri-snRNP, and free U6 snRNP). It binds directly to the 3'-terminal U-tract of U6 snRNA and plays a role in the biogenesis and stability of the U6 snRNP and U4/U6 snRNP complexes. LSM2-LSM8 probably also is involved degradation of nuclear pre-mRNA by targeting them for decapping, and in processing of pre-tRNAs, pre-rRNAs and U3 snoRNA. The protein is U6 snRNA-associated Sm-like protein LSm6 (snr-6) of Neurospora crassa (strain ATCC 24698 / 74-OR23-1A / CBS 708.71 / DSM 1257 / FGSC 987).